We begin with the raw amino-acid sequence, 476 residues long: Probable isoprenylcysteine alpha-carbonyl methylesterase ICMEL1 (476 aa).

Positions 92–104 (NCLSAFSDDTNGT) are enriched in polar residues. The segment at 92 to 116 (NCLSAFSDDTNGTADGGNNSGDRQT) is disordered. Helical transmembrane passes span 153–173 (FMAL…VGYY) and 208–228 (VVAF…GSLL). Substrate contacts are provided by residues 214 to 216 (GGA) and 285 to 287 (QSA). Active-site residues include Ser-286, Asp-388, and His-420.

Belongs to the AB hydrolase superfamily. Isoprenylcysteine methylesterase family. Expressed in roots, rosette and cauline leaves, stems, flowers and siliques.

Its subcellular location is the endoplasmic reticulum membrane. It localises to the golgi apparatus membrane. The catalysed reaction is [protein]-C-terminal S-[(2E,6E)-farnesyl]-L-cysteine methyl ester + H2O = [protein]-C-terminal S-[(2E,6E)-farnesyl]-L-cysteine + methanol + H(+). Functionally, catalyzes the demethylation of isoprenylcysteine methylesters. May be involved in the regulation of ABA signaling. The protein is Probable isoprenylcysteine alpha-carbonyl methylesterase ICMEL1 of Arabidopsis thaliana (Mouse-ear cress).